The chain runs to 629 residues: tRNA uridine 5-carboxymethylaminomethyl modification enzyme MnmG (629 aa).

Residues Gly13–Gly18, Val125, and Ser180 contribute to the FAD site. Gly273–Phe287 lines the NAD(+) pocket. Gln370 is a binding site for FAD.

This sequence belongs to the MnmG family. As to quaternary structure, homodimer. Heterotetramer of two MnmE and two MnmG subunits. The cofactor is FAD.

Its subcellular location is the cytoplasm. Its function is as follows. NAD-binding protein involved in the addition of a carboxymethylaminomethyl (cmnm) group at the wobble position (U34) of certain tRNAs, forming tRNA-cmnm(5)s(2)U34. This chain is tRNA uridine 5-carboxymethylaminomethyl modification enzyme MnmG, found in Salmonella agona (strain SL483).